Here is a 350-residue protein sequence, read N- to C-terminus: S-adenosylmethionine:tRNA ribosyltransferase-isomerase (350 aa).

This sequence belongs to the QueA family. Monomer.

Its subcellular location is the cytoplasm. The catalysed reaction is 7-aminomethyl-7-carbaguanosine(34) in tRNA + S-adenosyl-L-methionine = epoxyqueuosine(34) in tRNA + adenine + L-methionine + 2 H(+). It functions in the pathway tRNA modification; tRNA-queuosine biosynthesis. Functionally, transfers and isomerizes the ribose moiety from AdoMet to the 7-aminomethyl group of 7-deazaguanine (preQ1-tRNA) to give epoxyqueuosine (oQ-tRNA). The sequence is that of S-adenosylmethionine:tRNA ribosyltransferase-isomerase from Bacillus cereus (strain B4264).